Here is a 424-residue protein sequence, read N- to C-terminus: Cysteate synthase (424 aa).

At K106 the chain carries N6-(pyridoxal phosphate)lysine. 2 residues coordinate pyridoxal 5'-phosphate: N132 and T381.

This sequence belongs to the threonine synthase family. Cysteate synthase subfamily. As to quaternary structure, homotrimer. The cofactor is pyridoxal 5'-phosphate.

It carries out the reaction O-phospho-L-serine + sulfite + H(+) = L-cysteate + phosphate. The protein operates within cofactor biosynthesis; coenzyme M biosynthesis. In terms of biological role, specifically catalyzes the beta-elimination of phosphate from L-phosphoserine and the beta-addition of sulfite to the dehydroalanine intermediate to produce L-cysteate. This chain is Cysteate synthase, found in Methanoregula boonei (strain DSM 21154 / JCM 14090 / 6A8).